A 372-amino-acid chain; its full sequence is Zinc finger protein dpff-1 (372 aa).

The interval 108-204 is disordered; it reads VGPTTESVSD…SRSIVKETKY (97 aa). Positions 109–131 are enriched in polar residues; sequence GPTTESVSDSSNDSTTIRPSRQT. A compositionally biased stretch (basic and acidic residues) spans 132–141; that stretch reads QIKEEYRDDY. Acidic residues predominate over residues 142-158; sequence VLDDELSPDEFGSDEDD. Positions 184 to 196 are enriched in polar residues; it reads TTRSSVSRLTPSR. Residues 212–235 form a C2H2-type zinc finger; the sequence is YPCDKCSAKYKSLAGLSYHQSYLH. PHD-type zinc fingers lie at residues 256–314 and 316–361; these read SCDF…CKSC and ICGT…CQVE.

This sequence belongs to the requiem/DPF family.

Its subcellular location is the nucleus. The protein localises to the cytoplasm. Functionally, probable transcription factor, involved in meiosis and stress protection. In Caenorhabditis elegans, this protein is Zinc finger protein dpff-1.